The chain runs to 342 residues: Phosphate acyltransferase (342 aa).

Belongs to the PlsX family. As to quaternary structure, homodimer. Probably interacts with PlsY.

It is found in the cytoplasm. The catalysed reaction is a fatty acyl-[ACP] + phosphate = an acyl phosphate + holo-[ACP]. Its pathway is lipid metabolism; phospholipid metabolism. Catalyzes the reversible formation of acyl-phosphate (acyl-PO(4)) from acyl-[acyl-carrier-protein] (acyl-ACP). This enzyme utilizes acyl-ACP as fatty acyl donor, but not acyl-CoA. The sequence is that of Phosphate acyltransferase from Shewanella loihica (strain ATCC BAA-1088 / PV-4).